Here is a 462-residue protein sequence, read N- to C-terminus: Lysyl endopeptidase (462 aa).

Positions M1–A24 are cleaved as a signal peptide. Positions A25 to K211 are excised as a propeptide. Cystine bridges form between C224/C435, C230/C305, and C262/C284. Residues H283, D333, and S409 each act as charge relay system in the active site.

It belongs to the peptidase S1 family. Post-translationally, experiments performed in E.coli. Processing of pro-endopeptidase to mature endopeptidase is probably autocatalytic, as mutations in the probable active site residues prevent processing, and purified inactive pro-endopeptidase disappears in the presence of active endopeptidase.

Its subcellular location is the secreted. It catalyses the reaction Preferential cleavage: Lys-|-Xaa, including Lys-|-Pro.. Its function is as follows. Lysine-specific endoprotease. Involved in corneal virulence. The sequence is that of Lysyl endopeptidase (prpL) from Pseudomonas aeruginosa (strain ATCC 15692 / DSM 22644 / CIP 104116 / JCM 14847 / LMG 12228 / 1C / PRS 101 / PAO1).